The primary structure comprises 84 residues: Putative antitoxin VapB7 (84 aa).

Its function is as follows. Antitoxin component of a possible type II toxin-antitoxin (TA) system. The cognate toxin is VapC7. This is Putative antitoxin VapB7 (vapB7) from Mycobacterium tuberculosis (strain ATCC 25618 / H37Rv).